The chain runs to 443 residues: UDP-N-acetylmuramate--L-alanine ligase (443 aa).

110–116 (GAHGKTS) serves as a coordination point for ATP.

This sequence belongs to the MurCDEF family.

Its subcellular location is the cytoplasm. The catalysed reaction is UDP-N-acetyl-alpha-D-muramate + L-alanine + ATP = UDP-N-acetyl-alpha-D-muramoyl-L-alanine + ADP + phosphate + H(+). It participates in cell wall biogenesis; peptidoglycan biosynthesis. Cell wall formation. This chain is UDP-N-acetylmuramate--L-alanine ligase, found in Streptococcus equi subsp. equi (strain 4047).